Consider the following 706-residue polypeptide: DNA ligase (706 aa).

NAD(+)-binding positions include 48–52, 97–98, and E131; these read DAAYD and SL. The active-site N6-AMP-lysine intermediate is the K133. Residues R154, E191, K307, and K331 each coordinate NAD(+). The Zn(2+) site is built by C425, C428, C443, and C449. Positions 628–706 constitute a BRCT domain; sequence RADSAVAGKT…EDEWLKLIEG (79 aa).

Belongs to the NAD-dependent DNA ligase family. LigA subfamily. The cofactor is Mg(2+). It depends on Mn(2+) as a cofactor.

The catalysed reaction is NAD(+) + (deoxyribonucleotide)n-3'-hydroxyl + 5'-phospho-(deoxyribonucleotide)m = (deoxyribonucleotide)n+m + AMP + beta-nicotinamide D-nucleotide.. Functionally, DNA ligase that catalyzes the formation of phosphodiester linkages between 5'-phosphoryl and 3'-hydroxyl groups in double-stranded DNA using NAD as a coenzyme and as the energy source for the reaction. It is essential for DNA replication and repair of damaged DNA. This Afipia carboxidovorans (strain ATCC 49405 / DSM 1227 / KCTC 32145 / OM5) (Oligotropha carboxidovorans) protein is DNA ligase.